The sequence spans 305 residues: Glycine--tRNA ligase alpha subunit (305 aa).

The protein belongs to the class-II aminoacyl-tRNA synthetase family. As to quaternary structure, tetramer of two alpha and two beta subunits.

It localises to the cytoplasm. The enzyme catalyses tRNA(Gly) + glycine + ATP = glycyl-tRNA(Gly) + AMP + diphosphate. This chain is Glycine--tRNA ligase alpha subunit, found in Streptococcus thermophilus (strain CNRZ 1066).